The following is a 215-amino-acid chain: Protein-L-isoaspartate O-methyltransferase (215 aa).

Ser-62 is a catalytic residue.

It belongs to the methyltransferase superfamily. L-isoaspartyl/D-aspartyl protein methyltransferase family.

The protein resides in the cytoplasm. The enzyme catalyses [protein]-L-isoaspartate + S-adenosyl-L-methionine = [protein]-L-isoaspartate alpha-methyl ester + S-adenosyl-L-homocysteine. Its function is as follows. Catalyzes the methyl esterification of L-isoaspartyl residues in peptides and proteins that result from spontaneous decomposition of normal L-aspartyl and L-asparaginyl residues. It plays a role in the repair and/or degradation of damaged proteins. The protein is Protein-L-isoaspartate O-methyltransferase of Rhodopseudomonas palustris (strain BisA53).